The sequence spans 450 residues: Sorting nexin-4 (450 aa).

Met-1 is subject to N-acetylmethionine. The disordered stretch occupies residues 1 to 53 (MEQAAPDPERLWQPAPLEPLSHPDAGLESMVGEETKGARDEGPGDGTMTENNF). The segment covering 33–42 (EETKGARDEG) has biased composition (basic and acidic residues). A PX domain is found at 61–187 (SVSEAEKRTG…YLFLTQEGNW (127 aa)). A 1,2-diacyl-sn-glycero-3-phospho-(1D-myo-inositol-3-phosphate)-binding residues include Arg-106, Ser-108, Lys-132, and Arg-154.

The protein belongs to the sorting nexin family. Heterodimer; heterodimerizes with SNX7 or SNX30. Interacts with WWC1/KIBRA. Identified in a complex with WWC1/KIBRA and dynein components DYNLL1 and DYNC1I2. Interacts with BIN1.

It is found in the early endosome. Its subcellular location is the early endosome membrane. Involved in the regulation of endocytosis and in several stages of intracellular trafficking. Plays a role in recycling endocytosed transferrin receptor and prevent its degradation. Involved in autophagosome assembly by regulating trafficking and recycling of phospholipid scramblase ATG9A. This is Sorting nexin-4 from Bos taurus (Bovine).